The primary structure comprises 329 residues: MMSDSSSEIDVVKTRIPTYDEDDNTILYAYETKPEFVNKEPNIVSDASCNTEEQLRTVNDVLLHCQVIYDALQNLDKKTDVIRRKVSKIQRFYARSLWTNRKRSGYKKHSYRPVKKLKLQKMKKNEVYETFSYPQSYSPTLPVSRRENNSPSNLPRPPFCMEEYQRAEPEEDPILSRTPSPVHPSDFCEHNYQSYYASDGAMYGSSSGLCLGNPRADSIHNTYSTDHASAVSPSVTRSPVGNDGCIAEGNITKHPSTWSVEAVVLFLKQTDPVALCPLVDLFRSHEVDGKALLLLTSDVLLKHFGVKLGTAVKLCYYIDRLKQGKCFEN.

Phosphoserine is present on residues S138 and S238. Positions 138-157 (SPTLPVSRRENNSPSNLPRP) are disordered. Positions 258–325 (WSVEAVVLFL…YYIDRLKQGK (68 aa)) constitute an SAM domain.

This sequence belongs to the SCM family.

It is found in the nucleus. Functionally, putative Polycomb group (PcG) protein. PcG proteins act by forming multiprotein complexes, which are required to maintain the transcriptionally repressive state of homeotic genes throughout development. May be involved in spermatogenesis during sexual maturation. In Pan troglodytes (Chimpanzee), this protein is Sex comb on midleg-like protein 1 (SCML1).